Here is a 456-residue protein sequence, read N- to C-terminus: FAD-dependent monooxygenase sor5 (456 aa).

The chain crosses the membrane as a helical span at residues 18-38; the sequence is PLEVAIVGGGLTGLALALGLL. Asn-43 carries N-linked (GlcNAc...) asparagine glycosylation. 2 residues coordinate FAD: Glu-48 and Arg-119. Arg-200 is a catalytic residue. FAD-binding residues include Asp-331 and Ala-344.

This sequence belongs to the paxM FAD-dependent monooxygenase family. The cofactor is FAD.

It localises to the membrane. It participates in secondary metabolite biosynthesis. FAD-dependent monooxygenase; part of the SOR gene cluster that mediates the biosynthesis of sorbicillinoids, a diverse group of yellow secondary metabolites that restrict growth of competing pathogenic fungi but not of bacteria. Sorbicillinoids biosynthesis requires the action of two PKSs. The SOR cluster is required for the production of trichodimerol and dihydrotrichotetronin, with sor2 being sufficient for production of trichodimerol, but not dihydrotrichotetronin in the light. Sor1 iteratively combines three acetyl units and the growing chain is modified by the ketoacyl reductase subunit, and optional by the enoyl reductase subunit in the second cycle. The polyketide is then handed over to the PKS sor2, which adds three more acetyl units, and two methyl groups. Sor2 releases an aldehyde, which undergoes spontaneous cyclization resulting in the formation of sorbicillin or 2',3'-dihydrosorbicillin. The monooxygenase sor5 oxidizes sorbicillin and 2',3'-dihydrosorbicillin to 2',3'-dihydrosorbicillinol and sorbicillinol, respectively. The oxidoreductase sor8 further converts sorbicillinol into oxosorbicillinol. Sorbicillinol is the building block for the other sorbicillinoids such as disorbicillinol, bisvertinolon, dihydrobisvertinolone, and dihydrotrichotetronine. In Hypocrea jecorina (strain QM6a) (Trichoderma reesei), this protein is FAD-dependent monooxygenase sor5.